We begin with the raw amino-acid sequence, 326 residues long: MANFTDAASLQQFDELLKNNSKSLTVVHFHAPWAPQCSQMNDVMAELAKEHKHTMFVKLEAEAVPEVSEKYEITSVPTFLFFKGGEKIDRLDGAHAPELTNKVQRLGSGGGGAVGAGDVPKEDLNQRLKRLINAAPCMLFMKGSPQEPRCGFSRQIIQILKDHNVQYSSFDILSDEEVRQGLKTYSNWPTYPQVYVSGELIGGLDIVKELVESGELENTFPKTVSLENRLKSLINKSPVMLFMKGNKEAAKCGFSRQILEIMNNTGVEYDTFDILEDEEVRQGLKTYSNWPTFPQLYVKGDLIGGLDIVKELLEGGELVSVLKGEN.

The Thioredoxin domain maps to 1 to 108 (MANFTDAASL…LTNKVQRLGS (108 aa)). Glutaredoxin domains follow at residues 125–227 (NQRL…VSLE) and 227–326 (ENRL…KGEN). Positions 150 and 252 each coordinate [2Fe-2S] cluster.

Homodimer; the homodimer is independent of 2Fe-2S clusters. Heterotrimer; forms a heterotrimeric complex composed by two bola2 molecules and one glrx3 molecule; linked by [2Fe-2S] clusters.

Its subcellular location is the cytoplasm. It localises to the cytosol. Its function is as follows. Together with bola2, acts as a cytosolic iron-sulfur (Fe-S) cluster assembly factor that facilitates [2Fe-2S] cluster insertion into a subset of cytosolic proteins. Required for hemoglobin maturation. Does not possess any thyoredoxin activity since it lacks the conserved motif that is essential for catalytic activity. This chain is Glutaredoxin 3 (glrx3), found in Danio rerio (Zebrafish).